Here is a 187-residue protein sequence, read N- to C-terminus: Peptide deformylase (187 aa).

Fe cation-binding residues include C96 and H138. Residue E139 is part of the active site. Position 142 (H142) interacts with Fe cation.

The protein belongs to the polypeptide deformylase family. The cofactor is Fe(2+).

It carries out the reaction N-terminal N-formyl-L-methionyl-[peptide] + H2O = N-terminal L-methionyl-[peptide] + formate. Removes the formyl group from the N-terminal Met of newly synthesized proteins. Requires at least a dipeptide for an efficient rate of reaction. N-terminal L-methionine is a prerequisite for activity but the enzyme has broad specificity at other positions. In Brachyspira hyodysenteriae (strain ATCC 49526 / WA1), this protein is Peptide deformylase.